The chain runs to 492 residues: Cytoplasmic dynein 1 light intermediate chain 2 (492 aa).

Residue 61–68 (GEDGSGKT) participates in ATP binding. 3 disordered regions span residues 187 to 206 (PEEG…SGSD), 371 to 423 (AKQP…KNNA), and 437 to 492 (LSKK…ENEA). Ser-194 is modified (phosphoserine). Over residues 371-381 (AKQPATPTRAS) the composition is skewed to polar residues. A phosphoserine mark is found at Ser-383 and Ser-391. At Arg-397 the chain carries Omega-N-methylarginine. The span at 400–412 (PASVPSSSPGTSV) shows a compositional bias: low complexity. Phosphothreonine is present on Thr-441. Residues Ser-443 and Ser-446 each carry the phosphoserine modification. Over residues 452–469 (VQSTAKKSGQKTVLSNVQ) the composition is skewed to polar residues. A compositionally biased stretch (basic and acidic residues) spans 471 to 480 (ELDRMTRKPD). The span at 482–492 (MVTNSSTENEA) shows a compositional bias: polar residues.

This sequence belongs to the dynein light intermediate chain family. As to quaternary structure, homodimer. The cytoplasmic dynein 1 complex consists of two catalytic heavy chains (HCs) and a number of non-catalytic subunits presented by intermediate chains (ICs), light intermediate chains (LICs) and light chains (LCs); the composition seems to vary in respect to the IC, LIC and LC composition. The heavy chain homodimer serves as a scaffold for the probable homodimeric assembly of the respective non-catalytic subunits. The ICs and LICs bind directly to the HC dimer and the LCs assemble on the IC dimer. Interacts with DYNC1H1; DYNC1LI1 and DYNC1LI2 bind mutually exclusive to DYNC1H.

The protein localises to the cytoplasm. It is found in the cytoskeleton. Its function is as follows. Acts as one of several non-catalytic accessory components of the cytoplasmic dynein 1 complex that are thought to be involved in linking dynein to cargos and to adapter proteins that regulate dynein function. Cytoplasmic dynein 1 acts as a motor for the intracellular retrograde motility of vesicles and organelles along microtubules. May play a role in binding dynein to membranous organelles or chromosomes. The sequence is that of Cytoplasmic dynein 1 light intermediate chain 2 from Homo sapiens (Human).